The following is a 231-amino-acid chain: Lipid A acyltransferase PagP (231 aa).

The first 23 residues, 1 to 23, serve as a signal peptide directing secretion; the sequence is MNKLTVRNFIVGLLIVFSLNSFS. A compositionally biased stretch (low complexity) spans 24 to 43; sequence SPPSISNSSSNSIDENSPIN. The disordered stretch occupies residues 24–59; sequence SPPSISNSSSNSIDENSPINTFKISPDNQTSKKSDL. Residues His100, Asp145, and Ser146 contribute to the active site.

Belongs to the lipid A palmitoyltransferase family. Homodimer.

The protein resides in the cell outer membrane. The catalysed reaction is a lipid A + a 1,2-diacyl-sn-glycero-3-phosphocholine = a hepta-acyl lipid A + a 2-acyl-sn-glycero-3-phosphocholine. It catalyses the reaction a lipid IVA + a 1,2-diacyl-sn-glycero-3-phosphocholine = a lipid IVB + a 2-acyl-sn-glycero-3-phosphocholine. The enzyme catalyses a lipid IIA + a 1,2-diacyl-sn-glycero-3-phosphocholine = a lipid IIB + a 2-acyl-sn-glycero-3-phosphocholine. In terms of biological role, transfers a fatty acid residue from the sn-1 position of a phospholipid to the N-linked hydroxyfatty acid chain on the proximal unit of lipid A or its precursors. The chain is Lipid A acyltransferase PagP from Legionella longbeachae serogroup 1 (strain NSW150).